A 29-amino-acid chain; its full sequence is Snaclec multactivase regulatory subunit (29 aa).

The C-type lectin domain occupies 1–29 (DCLPGWSVYEGRCYKVFNQKTWKAAEKFC). Cysteine 2 and cysteine 13 are oxidised to a cystine.

This sequence belongs to the snaclec family. In terms of assembly, heterodimer of a metalloproteinase subunit and a regulatory subunit comprising two homologous polypeptides disulfide-linked. As to expression, expressed by the venom gland.

It localises to the secreted. Functionally, multactivase, a carinactivase-like calcium-dependent prothrombin activator, activates prothrombin via recognition of the calcium ion bound conformation of its gamma-carboxyglutamic acid (GLA) domain, and the subsequent conversion of prothrombin to active thrombin is catalyzed by the catalytic subunit. The protein is Snaclec multactivase regulatory subunit of Echis multisquamatus (Central Asian sand viper).